The following is a 243-amino-acid chain: Adenylate kinase 4 (243 aa).

40-45 (GSGKGT) is an ATP binding site. Residues 60–89 (ATGDMLRAAVAAKTPLGVKAKEAMDKGELV) are NMP. Residues T61, R66, 87 to 89 (ELV), 115 to 118 (GFPR), and Q122 each bind AMP. The interval 156-193 (GRWIHPSSGRSYHTKFAPPKVPGVDDVTGEPLIQRKDD) is LID. R157 provides a ligand contact to ATP. AMP-binding residues include R190 and R201.

Belongs to the adenylate kinase family.

It is found in the cytoplasm. It carries out the reaction AMP + ATP = 2 ADP. Its function is as follows. Catalyzes the reversible transfer of the terminal phosphate group between ATP and AMP. Plays an important role in cellular energy homeostasis and in adenine nucleotide metabolism. This chain is Adenylate kinase 4 (ADK-B), found in Oryza sativa subsp. japonica (Rice).